A 576-amino-acid chain; its full sequence is Arginine--tRNA ligase (576 aa).

The 'HIGH' region motif lies at 126–136; it reads ANPTGPMHIGH.

This sequence belongs to the class-I aminoacyl-tRNA synthetase family. As to quaternary structure, monomer.

It localises to the cytoplasm. It catalyses the reaction tRNA(Arg) + L-arginine + ATP = L-arginyl-tRNA(Arg) + AMP + diphosphate. The protein is Arginine--tRNA ligase of Rickettsia rickettsii (strain Iowa).